A 428-amino-acid polypeptide reads, in one-letter code: 3-phosphoshikimate 1-carboxyvinyltransferase (428 aa).

Residues Lys-21, Ser-22, and Arg-26 each coordinate 3-phosphoshikimate. Lys-21 is a phosphoenolpyruvate binding site. Phosphoenolpyruvate-binding residues include Gly-92 and Arg-120. 4 residues coordinate 3-phosphoshikimate: Ser-165, Gln-167, Asp-313, and Lys-340. Gln-167 is a binding site for phosphoenolpyruvate. Asp-313 serves as the catalytic Proton acceptor. 2 residues coordinate phosphoenolpyruvate: Arg-344 and Arg-386.

This sequence belongs to the EPSP synthase family. In terms of assembly, monomer.

The protein localises to the cytoplasm. It catalyses the reaction 3-phosphoshikimate + phosphoenolpyruvate = 5-O-(1-carboxyvinyl)-3-phosphoshikimate + phosphate. The protein operates within metabolic intermediate biosynthesis; chorismate biosynthesis; chorismate from D-erythrose 4-phosphate and phosphoenolpyruvate: step 6/7. Functionally, catalyzes the transfer of the enolpyruvyl moiety of phosphoenolpyruvate (PEP) to the 5-hydroxyl of shikimate-3-phosphate (S3P) to produce enolpyruvyl shikimate-3-phosphate and inorganic phosphate. The chain is 3-phosphoshikimate 1-carboxyvinyltransferase from Carboxydothermus hydrogenoformans (strain ATCC BAA-161 / DSM 6008 / Z-2901).